The chain runs to 616 residues: MDRAVSQVALENDEREAKNTWRLVFRIAILLLTVVTLAISAAALAYSMEASTPSDLVGIPTAISRTEEKITSALGSNQDVVDRIYKQVALESPLALLNTESTIMNAITSLSYQINGAANSSGCGAPIHDPDYIGGIGKELIVDDASDVTSFYPSAFQEHLNFIPAPTTGSGCTRIPSFDMSATHYCYTHNVILSGCRDRSHSHQYLALGVLRTSATGRVFFSTLRSINLDDTQNRKSCSVSATPLGCDMLCSKVTETEEEDYNSAIPTSMVHGRLGFDGQYHEKDLDVTTLFEDWVANYPGVGGGSFIDNRVWFPVYGGLKPNSPSDTAQEGKYVIYKRYNDTCPDEQDYQIRMAKSSYKPGRFGGKRVQQAILSIKVSTSLGEDPVLTVPPNTVTLMGAEGRVLTVGTSHFFYQRGSSYFSPALLYPMTVSNKTATLHSPYTFNAFTRPGSVPCQASARCPNSCVTGVYTDPYPLVFYRNHTLRGVFGTMLDDEQARLNPVSAVFDSISRSRITRVSSSSTKAAYTTSTCFKVVKTNKTYCLSIAEISNTLFGEFRIVPLLVEILKDDGVREARSGRLSQLQEGWKDDIVSPIFCDAKNQTEYRRELESYAASWP.

Residues 1-26 (MDRAVSQVALENDEREAKNTWRLVFR) lie on the Intravirion side of the membrane. The helical transmembrane segment at 27-47 (IAILLLTVVTLAISAAALAYS) threads the bilayer. Over 48 to 616 (MEASTPSDLV…ELESYAASWP (569 aa)) the chain is Virion surface. N-linked (GlcNAc...) asparagine; by host glycosylation is present at asparagine 119. Residues 124–152 (GAPIHDPDYIGGIGKELIVDDASDVTSFY) are important for interaction with fusion/F protein. Cystine bridges form between cysteine 172/cysteine 196, cysteine 186/cysteine 247, and cysteine 238/cysteine 251. The segment at 234–239 (NRKSCS) is involved in neuraminidase activity. N-linked (GlcNAc...) asparagine; by host glycans are attached at residues asparagine 341 and asparagine 433. Cystine bridges form between cysteine 344–cysteine 461 and cysteine 455–cysteine 465. Asparagine 481, asparagine 538, and asparagine 600 each carry an N-linked (GlcNAc...) asparagine; by host glycan. An intrachain disulfide couples cysteine 531 to cysteine 542.

It belongs to the paramyxoviruses hemagglutinin-neuraminidase family. As to quaternary structure, homotetramer; composed of disulfide-linked homodimers. Interacts with F protein trimer. Interacts with host CG-1B; this interaction inhibits viral adsorption and replication rather than internalization.

It is found in the virion membrane. The protein resides in the host cell membrane. The enzyme catalyses Hydrolysis of alpha-(2-&gt;3)-, alpha-(2-&gt;6)-, alpha-(2-&gt;8)- glycosidic linkages of terminal sialic acid residues in oligosaccharides, glycoproteins, glycolipids, colominic acid and synthetic substrates.. Functionally, mediates the viral entry into the host cell together with fusion/F protein. Attaches the virus to sialic acid-containing cell receptors and thereby initiates infection. Binding of HN protein to the receptor induces a conformational change that allows the F protein to trigger virion/cell membranes fusion. Neuraminidase activity ensures the efficient spread of the virus by dissociating the mature virions from the neuraminic acid containing glycoproteins. The chain is Hemagglutinin-neuraminidase (HN) from Gallus gallus (Chicken).